The chain runs to 493 residues: Putative MgpC-like protein MPN_414 (493 aa).

Residues 1–14 (MKPTSLPKNFTNNP) show a composition bias toward polar residues. Disordered stretches follow at residues 1–92 (MKPT…GHNS) and 441–493 (KSAR…SGNH). Composition is skewed to basic and acidic residues over residues 25–34 (DNGRAYRKLN) and 44–56 (DSTK…DKDG). Composition is skewed to polar residues over residues 72-92 (VSST…GHNS) and 445-472 (ENAQ…SPCR). The span at 482–493 (RVTEEERSSGNH) shows a compositional bias: basic and acidic residues.

This sequence belongs to the MgpC family.

This chain is Putative MgpC-like protein MPN_414, found in Mycoplasma pneumoniae (strain ATCC 29342 / M129 / Subtype 1) (Mycoplasmoides pneumoniae).